The chain runs to 141 residues: Nucleoside diphosphate kinase (141 aa).

ATP is bound by residues lysine 10, phenylalanine 58, arginine 86, threonine 92, arginine 103, and asparagine 113. Histidine 116 functions as the Pros-phosphohistidine intermediate in the catalytic mechanism.

This sequence belongs to the NDK family. Homotetramer. It depends on Mg(2+) as a cofactor.

The protein localises to the cytoplasm. The enzyme catalyses a 2'-deoxyribonucleoside 5'-diphosphate + ATP = a 2'-deoxyribonucleoside 5'-triphosphate + ADP. It carries out the reaction a ribonucleoside 5'-diphosphate + ATP = a ribonucleoside 5'-triphosphate + ADP. In terms of biological role, major role in the synthesis of nucleoside triphosphates other than ATP. The ATP gamma phosphate is transferred to the NDP beta phosphate via a ping-pong mechanism, using a phosphorylated active-site intermediate. In Hydrogenovibrio crunogenus (strain DSM 25203 / XCL-2) (Thiomicrospira crunogena), this protein is Nucleoside diphosphate kinase.